We begin with the raw amino-acid sequence, 313 residues long: MHSYTLLAPAKINLYLEIVGDRPDGFHELVMVMQTVALCDRITLRPNGLQEFRLFCHHPLVPQDSSNLAHRAATLMAKEFPRLFANYGGIDITIEKYIPVAAGLAGGSTNAAAVLVGIDLIWELGLTRPELETLAARLGSDTSFCVTGGTVICTGRGEILDPIAPLTGLWVILAKYDHLSVSTPWAYQSYRQKFQDTYLSSPEDFHHRRQQVSSGALVQAIAQKKPAAIGKFIHNDLEKVVLPEFPLVAELRQVLGDLGGLGTMMSGSGPTVFTLCSSQEVAETIVKEAREILVAPDLQFWIAPITDTGIQVT.

The active site involves lysine 11. Residue 99–109 (PVAAGLAGGST) coordinates ATP. Aspartate 141 is a catalytic residue.

The protein belongs to the GHMP kinase family. IspE subfamily.

The catalysed reaction is 4-CDP-2-C-methyl-D-erythritol + ATP = 4-CDP-2-C-methyl-D-erythritol 2-phosphate + ADP + H(+). The protein operates within isoprenoid biosynthesis; isopentenyl diphosphate biosynthesis via DXP pathway; isopentenyl diphosphate from 1-deoxy-D-xylulose 5-phosphate: step 3/6. In terms of biological role, catalyzes the phosphorylation of the position 2 hydroxy group of 4-diphosphocytidyl-2C-methyl-D-erythritol. This is 4-diphosphocytidyl-2-C-methyl-D-erythritol kinase from Microcystis aeruginosa (strain NIES-843 / IAM M-2473).